Here is a 110-residue protein sequence, read N- to C-terminus: uncharacterized protein (110 aa).

In terms of biological role, may play a regulatory role in sulfomenaquinone (SMK) biosynthesis. This is an uncharacterized protein from Mycobacterium bovis (strain ATCC BAA-935 / AF2122/97).